Reading from the N-terminus, the 341-residue chain is Chorismate synthase (341 aa).

2 disordered regions span residues 45–64 and 109–134; these read LERRRPGHHGSGQIVSGRQE and HADDMWRNKFGHSDHRGGGRSSGRET. Arginine 48 is an NADP(+) binding site. FMN is bound by residues 128–130, glycine 280, 295–299, and arginine 308; these read RSS and KPTSS.

This sequence belongs to the chorismate synthase family. In terms of assembly, homotetramer. The cofactor is FMNH2.

It catalyses the reaction 5-O-(1-carboxyvinyl)-3-phosphoshikimate = chorismate + phosphate. It participates in metabolic intermediate biosynthesis; chorismate biosynthesis; chorismate from D-erythrose 4-phosphate and phosphoenolpyruvate: step 7/7. In terms of biological role, catalyzes the anti-1,4-elimination of the C-3 phosphate and the C-6 proR hydrogen from 5-enolpyruvylshikimate-3-phosphate (EPSP) to yield chorismate, which is the branch point compound that serves as the starting substrate for the three terminal pathways of aromatic amino acid biosynthesis. This reaction introduces a second double bond into the aromatic ring system. This Bdellovibrio bacteriovorus (strain ATCC 15356 / DSM 50701 / NCIMB 9529 / HD100) protein is Chorismate synthase.